We begin with the raw amino-acid sequence, 413 residues long: NADH:flavin oxidoreductase FG08077 (413 aa).

Residue alanine 53–cysteine 56 coordinates FMN. Tyrosine 58 provides a ligand contact to substrate. 2 residues coordinate FMN: alanine 88 and glutamine 130. Histidine 211–histidine 214 is a binding site for substrate. FMN-binding positions include arginine 264 and glycine 370 to arginine 371.

The protein belongs to the NADH:flavin oxidoreductase/NADH oxidase family. NamA subfamily. FMN is required as a cofactor.

It participates in mycotoxin biosynthesis. Functionally, NADH:flavin oxidoreductase; part of the gene cluster that mediates the biosynthesis of butenolide, a mycotoxin that shows antibiotic activity but does not seem to play a major role in the spread of head blight in wheat. Butenolide is derived from glutamic acid via a 4-acetamido-2-butenoic acid intermediate. The predicted function of the NADH:flavin oxidoreductase FG08077, the cytochrome P450 monooxygenase FG08079, the decarboxylase FG08083, and the putative acetyltransferase FG08082 are consistent with this pathway, however, the respective activities of the butelonide biosynthesis cluster enzymes have still to be experimentally determined. This chain is NADH:flavin oxidoreductase FG08077, found in Gibberella zeae (strain ATCC MYA-4620 / CBS 123657 / FGSC 9075 / NRRL 31084 / PH-1) (Wheat head blight fungus).